Consider the following 48-residue polypeptide: Large ribosomal subunit protein bL33B (48 aa).

This sequence belongs to the bacterial ribosomal protein bL33 family.

This is Large ribosomal subunit protein bL33B (rpmG2) from Mycoplasma pneumoniae (strain ATCC 29342 / M129 / Subtype 1) (Mycoplasmoides pneumoniae).